Consider the following 289-residue polypeptide: MYG1 protein TC_0665 (289 aa).

Belongs to the MYG1 family.

The protein is MYG1 protein TC_0665 of Chlamydia muridarum (strain MoPn / Nigg).